The following is a 256-amino-acid chain: Na(+)-translocating NADH-quinone reductase subunit C (256 aa).

Residues 12 to 32 (LGVVIGLSLVCSIIVSTAAVG) traverse the membrane as a helical segment. Thr-224 carries the FMN phosphoryl threonine modification.

It belongs to the NqrC family. In terms of assembly, composed of six subunits; NqrA, NqrB, NqrC, NqrD, NqrE and NqrF. The cofactor is FMN.

The protein localises to the cell inner membrane. The enzyme catalyses a ubiquinone + n Na(+)(in) + NADH + H(+) = a ubiquinol + n Na(+)(out) + NAD(+). With respect to regulation, this reaction is tightly coupled to the Na(+) pumping activity and specifically requires Na(+) for activity. Inhibited by korormicin and 2-N-heptyl-4-hydroxyquinoline N-oxide (HQNO). Its function is as follows. NQR complex catalyzes the reduction of ubiquinone-1 to ubiquinol by two successive reactions, coupled with the transport of Na(+) ions from the cytoplasm to the periplasm. NqrA to NqrE are probably involved in the second step, the conversion of ubisemiquinone to ubiquinol. The sequence is that of Na(+)-translocating NADH-quinone reductase subunit C from Vibrio alginolyticus.